The primary structure comprises 492 residues: Ribose import ATP-binding protein RbsA (492 aa).

2 consecutive ABC transporter domains span residues 3-239 and 238-492; these read IDMR…VGRK and RKLE…TGGK. ATP is bound at residue 35–42; it reads GENGAGKS.

It belongs to the ABC transporter superfamily. Ribose importer (TC 3.A.1.2.1) family. As to quaternary structure, the complex is composed of an ATP-binding protein (RbsA), two transmembrane proteins (RbsC) and a solute-binding protein (RbsB).

It localises to the cell membrane. It catalyses the reaction D-ribose(out) + ATP + H2O = D-ribose(in) + ADP + phosphate + H(+). In terms of biological role, part of the ABC transporter complex RbsABC involved in ribose import. Responsible for energy coupling to the transport system. This Streptococcus agalactiae serotype III (strain NEM316) protein is Ribose import ATP-binding protein RbsA.